A 602-amino-acid polypeptide reads, in one-letter code: MKPYKIENIRNFSIIAHIDHGKSTIADRLLESTSTIEQREMREQLLDSMDLERERGITIKAHPVTMTYEYEGETYELNLIDTPGHVDFSYEVSRSLAACEGALLIVDAAQGVQAQSLANVYLALERDLEIIPVLNKIDLPAAQPEAIKKQIEEFIGLDTSNTIACSAKTGQGIPEILESIIRLVPPPKPPQETELKALIFDSHYDPYVGIMVYVRVISGEIKKGDRITFMATKGSSFEVLGIGAFLPEATLMEGSLRAGQVGYFIANLKKVKDVKIGDTVTTVKHPAKEPLEGFKEIKPVVFAGIYPIDSSDFDTLKDALGRLQLNDSALTIEQENSHSLGFGFRCGFLGLLHLEIIFERISREFDLDIIATAPSVIYKVVLKNGKTLFIDNPTAYPDPALIEHMEEPWVHVNIITPQEYLSNIMSLCMDKRGICLKTDMLDQHRLVLSYELPLNEIVSDFNDKLKSVTKGYGSFDYRLGDYKKGAIIKLEILINDEAVDAFSCLVHRDKAESKGRSICEKLVDVIPPQLFKIPIQAAINKKIIARETIRALAKNVTAKCYGGDITRKRKLWDKQKKGKKRMKEFGKVSIPNTAFVEVLKME.

The 182-residue stretch at 7–188 folds into the tr-type G domain; that stretch reads ENIRNFSIIA…SIIRLVPPPK (182 aa). GTP-binding positions include 19 to 24 and 135 to 138; these read DHGKST and NKID.

Belongs to the TRAFAC class translation factor GTPase superfamily. Classic translation factor GTPase family. LepA subfamily.

Its subcellular location is the cell inner membrane. The enzyme catalyses GTP + H2O = GDP + phosphate + H(+). Functionally, required for accurate and efficient protein synthesis under certain stress conditions. May act as a fidelity factor of the translation reaction, by catalyzing a one-codon backward translocation of tRNAs on improperly translocated ribosomes. Back-translocation proceeds from a post-translocation (POST) complex to a pre-translocation (PRE) complex, thus giving elongation factor G a second chance to translocate the tRNAs correctly. Binds to ribosomes in a GTP-dependent manner. The sequence is that of Elongation factor 4 from Chlamydia trachomatis serovar D (strain ATCC VR-885 / DSM 19411 / UW-3/Cx).